Here is a 620-residue protein sequence, read N- to C-terminus: Probable potassium transport system protein Kup (620 aa).

Helical transmembrane passes span 11-31 (LAFLAMGIVYGDIGTSPLYAF), 51-71 (ILSLVFWAFVLIVSIKYLLLV), 100-120 (IAMLLGILATGFFFGEAVITP), 138-158 (LAPYVLPIAMMIIVALFAVQA), 167-187 (FFAPVMLLWFLVLALLGAHAI), 202-222 (AVHFVLLHGQHTLFILGLVVL), 246-266 (WFALVMPSLLLNYFGQGAYLL), 288-308 (LILLATFATVIASQAVISGIF), 334-354 (GQIYVPAANMLLFVAVIFVML), 364-384 (AAYGIAVTAIMMISSLLLVLV), 396-416 (VVTIGIAFIGMDTLLLASTST), and 418-438 (LMEGGWLPLLLGCVVFIVMYI).

It belongs to the HAK/KUP transporter (TC 2.A.72) family.

Its subcellular location is the cell inner membrane. The catalysed reaction is K(+)(in) + H(+)(in) = K(+)(out) + H(+)(out). Transport of potassium into the cell. Likely operates as a K(+):H(+) symporter. This is Probable potassium transport system protein Kup from Vibrio cholerae serotype O1 (strain ATCC 39541 / Classical Ogawa 395 / O395).